A 477-amino-acid chain; its full sequence is UDP-N-acetylmuramate--L-alanine ligase (477 aa).

Residue 112–118 (GTHGKTT) coordinates ATP.

This sequence belongs to the MurCDEF family.

It localises to the cytoplasm. The enzyme catalyses UDP-N-acetyl-alpha-D-muramate + L-alanine + ATP = UDP-N-acetyl-alpha-D-muramoyl-L-alanine + ADP + phosphate + H(+). It functions in the pathway cell wall biogenesis; peptidoglycan biosynthesis. Cell wall formation. The chain is UDP-N-acetylmuramate--L-alanine ligase from Cupriavidus necator (strain ATCC 17699 / DSM 428 / KCTC 22496 / NCIMB 10442 / H16 / Stanier 337) (Ralstonia eutropha).